Consider the following 347-residue polypeptide: MKVIKTLSIINFFIFVTFNIKNESKYSNTFINNAYNMSIRRSMAESKPPTGDGAVASAGNGAVASAGNGAVASAGNGAVASAGNGAGNGAGNGAGNGAGNGAGNGAGNGAGNGAGNGAGNGAGNGAGNGAGNGAGNGAGNGAGNGAVASAGNGAGNGAVASAGNGAVAERSSSTPATTTTTTTTNDAEASTSTSSENSNHNNAETNPKGNGEVQPNQANKETQNNSNVQQDSQTKSNVPRTQDADTKSPTAQPEQAENSAPTAEQTESPELQSAPENKGTGQHGHMHGSRNNHPQNTSDSQKECTDGNKENCGAATSLLNNSSNIASINKFVVLISATLVLSFAIFI.

The signal sequence occupies residues 1–20 (MKVIKTLSIINFFIFVTFNI). N-linked (GlcNAc...) asparagine glycans are attached at residues asparagine 22 and asparagine 36. A polymorphic region region spans residues 44–273 (AESKPPTGDG…EQTESPELQS (230 aa)). 22 tandem repeats follow at residues 53–60 (GAVASAGN), 61–68 (GAVASAGN), 69–76 (GAVASAGN), 77–84 (GAVASAGN), 85–88 (GAGN), 89–92 (GAGN), 93–96 (GAGN), 97–100 (GAGN), 101–104 (GAGN), 105–108 (GAGN), 109–112 (GAGN), 113–116 (GAGN), 117–120 (GAGN), 121–124 (GAGN), 125–128 (GAGN), 129–132 (GAGN), 133–136 (GAGN), 137–140 (GAGN), 141–144 (GAGN), 145–152 (GAVASAGN), 153–156 (GAGN), and 157–164 (GAVASAGN). Residues 53 to 164 (GAVASAGNGA…GNGAVASAGN (112 aa)) are 6 X 8 AA repeats of G-A-V-A-S-A-G-N. Residues 85-156 (GAGNGAGNGA…VASAGNGAGN (72 aa)) are 16 X 4 AA repeats of G-A-G-N. Positions 165-206 (GAVAERSSSTPATTTTTTTTNDAEASTSTSSENSNHNNAETN) are enriched in low complexity. The tract at residues 165–308 (GAVAERSSST…DSQKECTDGN (144 aa)) is disordered. Composition is skewed to polar residues over residues 213-240 (VQPN…NVPR) and 247-275 (KSPT…QSAP). Asparagine 224 is a glycosylation site (N-linked (GlcNAc...) asparagine). A glycan (N-linked (GlcNAc...) asparagine) is linked at asparagine 296. A disulfide bond links cysteine 304 and cysteine 312. Residues asparagine 320 and asparagine 321 are each glycosylated (N-linked (GlcNAc...) asparagine). The GPI-anchor amidated asparagine moiety is linked to residue asparagine 321. Positions 322–347 (SSNIASINKFVVLISATLVLSFAIFI) are cleaved as a propeptide — removed in mature form.

The protein resides in the cell membrane. Its function is as follows. May play a role in the merozoite attachment to the erythrocyte. This Plasmodium falciparum (isolate Nig32 / Nigeria) protein is Merozoite surface protein 2.